We begin with the raw amino-acid sequence, 280 residues long: Protein FAM131C (280 aa).

Residues glutamine 195 to asparagine 280 form a disordered region. The segment covering serine 197 to phenylalanine 211 has biased composition (polar residues). Residues serine 215 to proline 227 show a composition bias toward pro residues.

The protein belongs to the FAM131 family.

The polypeptide is Protein FAM131C (FAM131C) (Homo sapiens (Human)).